The sequence spans 27 residues: Caerulein precursor fragment R8 (27 aa).

Expressed by the skin glands.

It is found in the secreted. Its function is as follows. Antimicrobial peptide. The sequence is that of Caerulein precursor fragment R8 from Xenopus ruwenzoriensis (Uganda clawed frog).